The chain runs to 373 residues: RNA 3'-terminal phosphate cyclase-like protein (373 aa).

The protein belongs to the RNA 3'-terminal cyclase family. Type 2 subfamily. As to quaternary structure, part of the small subunit (SSU) processome, composed of more than 70 proteins and the RNA chaperone small nucleolar RNA (snoRNA) U3. Interacts with BMS1.

The protein localises to the nucleus. The protein resides in the nucleolus. In terms of biological role, as part of the small subunit (SSU) processome, it plays a role in 40S-ribosomal-subunit biogenesis in the early pre-rRNA processing steps at sites A0, A1 and A2 that are required for proper maturation of the 18S RNA. Activates BMS1 by promoting GDP/GTP exchange. Does not have cyclase activity. This chain is RNA 3'-terminal phosphate cyclase-like protein, found in Homo sapiens (Human).